The chain runs to 186 residues: ATP-dependent protease subunit HslV (186 aa).

Thr-14 is an active-site residue. Na(+) is bound by residues Ala-168, Cys-171, and Thr-174.

The protein belongs to the peptidase T1B family. HslV subfamily. A double ring-shaped homohexamer of HslV is capped on each side by a ring-shaped HslU homohexamer. The assembly of the HslU/HslV complex is dependent on binding of ATP.

The protein resides in the cytoplasm. It carries out the reaction ATP-dependent cleavage of peptide bonds with broad specificity.. With respect to regulation, allosterically activated by HslU binding. Protease subunit of a proteasome-like degradation complex believed to be a general protein degrading machinery. The protein is ATP-dependent protease subunit HslV of Bradyrhizobium diazoefficiens (strain JCM 10833 / BCRC 13528 / IAM 13628 / NBRC 14792 / USDA 110).